The following is a 308-amino-acid chain: MSRKINDTFDACFWEEYLESQGSRLPPLPDVQRITPRVVRVLAGNPGGFQLQGTNTYLVGSGREKILIDTGQGLPVWIDHIAQVVAENDLKIVAALITHWHGDHTGGVPDLLVHFPHLKSAIYKNQPDRGQQDILDGQVFQVEGATIRALHTPGHAVDHMCFVLEEEQAIFTGDNVLGHGFTVVEDLGAYTNSLGIMNDQGCQIGYPAHGVVITDMPAKMAEYRDQRLRRERQVISALRESRQKNAGRGSITVQEVVQSVHGTVPEDVSKKALEPFMQEVLLKLAGDRKVAFELQGGVKRWFIVGNRV.

Zn(2+)-binding residues include His99, His101, Asp103, and His104. Residue Asp103 is the Proton donor/acceptor of the active site.

The protein belongs to the metallo-beta-lactamase superfamily. It depends on Zn(2+) as a cofactor.

The catalysed reaction is atrochrysone carboxyl-[ACP] + H2O = atrochrysone carboxylate + holo-[ACP] + H(+). It participates in secondary metabolite biosynthesis. Atrochrysone carboxyl ACP thioesterase; part of the gene cluster that mediates the biosynthesis of physcion, a natural anthraquinone fungicide that can prevent plant fungal infections. The pathway begins with the polyketide synthase AcPKS that condenses 8 malonyl-CoA units to synthesize atrochrysone thioester which is released from the synthase by the atrochrysone carboxyl ACP thioesterase AcTE that breaks the thioester bond and leads to free atrochrysone carboxylic acid. Spontaneous decarboxylation of atrochrysone carboxylic acid leads to the formation of atrochrysone. Then, atrochrysone undergoes spontaneous dehydration and oxidation, giving the products emodin anthrone and emodin. The O-methyltransferase AcOMT then methylates the C-6 hydroxyl of emodin to form physcion. The protein is Atrochrysone carboxyl ACP thioesterase of Aspergillus chevalieri (Eurotium chevalieri).